The sequence spans 323 residues: Beta-ketoacyl-[acyl-carrier-protein] synthase III (323 aa).

Residues C113 and H250 contribute to the active site. The segment at 251 to 255 (QANRR) is ACP-binding. Residue N280 is part of the active site.

This sequence belongs to the thiolase-like superfamily. FabH family. As to quaternary structure, homodimer.

It is found in the cytoplasm. The enzyme catalyses malonyl-[ACP] + acetyl-CoA + H(+) = 3-oxobutanoyl-[ACP] + CO2 + CoA. The protein operates within lipid metabolism; fatty acid biosynthesis. In terms of biological role, catalyzes the condensation reaction of fatty acid synthesis by the addition to an acyl acceptor of two carbons from malonyl-ACP. Catalyzes the first condensation reaction which initiates fatty acid synthesis and may therefore play a role in governing the total rate of fatty acid production. Possesses both acetoacetyl-ACP synthase and acetyl transacylase activities. Its substrate specificity determines the biosynthesis of branched-chain and/or straight-chain of fatty acids. This Rhizobium rhizogenes (strain K84 / ATCC BAA-868) (Agrobacterium radiobacter) protein is Beta-ketoacyl-[acyl-carrier-protein] synthase III.